Here is a 238-residue protein sequence, read N- to C-terminus: 4-hydroxy-tetrahydrodipicolinate reductase (238 aa).

12–17 (GASGRM) is a binding site for NAD(+). Arginine 40 is a binding site for NADP(+). NAD(+) contacts are provided by residues 93–95 (GTT) and 117–120 (ASNF). Histidine 149 (proton donor/acceptor) is an active-site residue. (S)-2,3,4,5-tetrahydrodipicolinate is bound at residue histidine 150. Residue lysine 153 is the Proton donor of the active site. 159–160 (GT) contributes to the (S)-2,3,4,5-tetrahydrodipicolinate binding site.

This sequence belongs to the DapB family.

The protein localises to the cytoplasm. The catalysed reaction is (S)-2,3,4,5-tetrahydrodipicolinate + NAD(+) + H2O = (2S,4S)-4-hydroxy-2,3,4,5-tetrahydrodipicolinate + NADH + H(+). The enzyme catalyses (S)-2,3,4,5-tetrahydrodipicolinate + NADP(+) + H2O = (2S,4S)-4-hydroxy-2,3,4,5-tetrahydrodipicolinate + NADPH + H(+). The protein operates within amino-acid biosynthesis; L-lysine biosynthesis via DAP pathway; (S)-tetrahydrodipicolinate from L-aspartate: step 4/4. Catalyzes the conversion of 4-hydroxy-tetrahydrodipicolinate (HTPA) to tetrahydrodipicolinate. This chain is 4-hydroxy-tetrahydrodipicolinate reductase, found in Xanthomonas euvesicatoria pv. vesicatoria (strain 85-10) (Xanthomonas campestris pv. vesicatoria).